The chain runs to 1397 residues: Protein RhsC (1397 aa).

28 repeat units span residues 330–352, 353–374, 375–417, 418–438, 439–460, 461–481, 482–502, 503–525, 526–546, 547–567, 568–588, 589–609, 610–629, 630–650, 651–671, 672–691, 692–711, 712–734, 735–758, 808–828, 829–850, 851–871, 872–894, 895–930, 931–959, 960–984, 985–1019, and 1162–1186. The segment at 330–1186 is 28 X approximate tandem repeats; sequence NTQVRSFTYD…LNEENPHQLQ (857 aa). The disordered stretch occupies residues 1292–1312; the sequence is GGQDQRGESKGDGLWGPGKAS.

The protein belongs to the RHS family.

In terms of biological role, rhs elements have a nonessential function. They may play an important role in the natural ecology of the cell. In Escherichia coli (strain K12), this protein is Protein RhsC (rhsC).